The primary structure comprises 333 residues: Olfactory receptor 1078 (333 aa).

The Extracellular segment spans residues 1-25 (MDSSNRTRVSEFLLLGFVENKDLQP). Asparagine 5 carries an N-linked (GlcNAc...) asparagine glycan. Residues 26 to 50 (LIYGLFLSMYLVTVIGNISIIVAII) form a helical membrane-spanning segment. Over 51–57 (SDPCLHT) the chain is Cytoplasmic. A helical transmembrane segment spans residues 58-79 (PMYFFLSNLSFVDICFISTTVP). At 80–100 (KMLVNIQTQNNVITYAGCITQ) the chain is on the extracellular side. A disulfide bond links cysteine 97 and cysteine 189. A helical membrane pass occupies residues 101–120 (IYFFLLFVELDNFLLTIMAY). The Cytoplasmic portion of the chain corresponds to 121–139 (DRYVAICHPMHYTVIMNYK). A helical membrane pass occupies residues 140 to 158 (LCGFLVLVSWIVSVLHALF). Over 159-196 (QSLMMLALPFCTHLEIPHYFCEPNQVIQLTCSDAFLND) the chain is Extracellular. Residues 197 to 219 (LVIYFTLVLLATVPLAGIFYSYF) form a helical membrane-spanning segment. At 220-236 (KIVSSICAISSVHGKYK) the chain is on the cytoplasmic side. The chain crosses the membrane as a helical span at residues 237–260 (AFSTCASHLSVVSLFYCTGLGVYL). The Extracellular segment spans residues 261 to 272 (SSAANNSSQASA). A helical membrane pass occupies residues 273–292 (TASVMYTVVTPMVNPFIYSL). At 293 to 333 (RNKDVKSVLKKTLCEEVIRSPPSLLHFFLVLCHLPCFIFCY) the chain is on the cytoplasmic side.

The protein belongs to the G-protein coupled receptor 1 family. In terms of tissue distribution, olfactory epithelium.

It localises to the cell membrane. Its function is as follows. Odorant receptor. This chain is Olfactory receptor 1078 (Olr1078), found in Rattus norvegicus (Rat).